The following is a 514-amino-acid chain: Palmitoyltransferase pfa3 (514 aa).

At 1–31 the chain is on the cytoplasmic side; that stretch reads MATLAMSTPSSPTWPKRRPKAWAMRCERYCC. A helical transmembrane segment spans residues 32-52; it reads AAASYFPLAFVYSLTTWAVYV. The Lumenal portion of the chain corresponds to 53 to 64; the sequence is EASVGLKPSSSS. The chain crosses the membrane as a helical span at residues 65–85; that stretch reads WIGLPSSILGVVLYLALNISY. At 86 to 174 the chain is on the cytoplasmic side; the sequence is TTAVFTDPGS…TCVGLRNYKA (89 aa). Positions 130–180 constitute a DHHC domain; that stretch reads RFCKKCQCPKPDRAHHCSTCKRCVLKMDHHCPWLATCVGLRNYKAFLLFLI. Residues 175–195 traverse the membrane as a helical segment; sequence FLLFLIYTSLFCWVDFGVSAI. Topologically, residues 196-209 are lumenal; that stretch reads WIWTEVFNDTRYMD. Residues 210–230 form a helical membrane-spanning segment; that stretch reads GILPVNVVLLSILGGIIGLVL. At 231–514 the chain is on the cytoplasmic side; the sequence is TGFTAWHISL…SREDDWRDWD (284 aa). 2 disordered regions span residues 307 to 336 and 436 to 514; these read VTRP…DLER and GNEL…RDWD. A compositionally biased stretch (polar residues) spans 318–328; it reads DNLTPAQQALS. Residues 505–514 are compositionally biased toward basic and acidic residues; the sequence is SREDDWRDWD.

This sequence belongs to the DHHC palmitoyltransferase family. PFA3 subfamily. Autopalmitoylated.

The protein localises to the vacuole membrane. The catalysed reaction is L-cysteinyl-[protein] + hexadecanoyl-CoA = S-hexadecanoyl-L-cysteinyl-[protein] + CoA. In terms of biological role, palmitoyltransferase specific for VAC8. Palmitoylates VAC8 at one or more of its N-terminal cysteine residues, which is required for its proper membrane localization. This Emericella nidulans (strain FGSC A4 / ATCC 38163 / CBS 112.46 / NRRL 194 / M139) (Aspergillus nidulans) protein is Palmitoyltransferase pfa3 (pfa3).